The primary structure comprises 256 residues: MALAKRIIPCLDVDNGRVVKGVKFENIRDAGDPVEIARRYDEQGADEITFLDITASVDGRDTTLHTVERMASQVFIPLTVGGGVRSVQDIRNLLNAGADKVSINTAAVFNPEFVGEAAERFGSQCIVVAIDAKKVSAPGEAPRWEIFTHGGRKPTGLDAVLWAKKMEDLGAGEILLTSMDQDGVKSGYDLGVTRAISEAVNVPVIASGGVGNLEHLAAGILEGKADAVLAASIFHFGEYTVPEAKAYLASRGIVVR.

Residues D12 and D131 contribute to the active site.

This sequence belongs to the HisA/HisF family. Heterodimer of HisH and HisF.

Its subcellular location is the cytoplasm. The catalysed reaction is 5-[(5-phospho-1-deoxy-D-ribulos-1-ylimino)methylamino]-1-(5-phospho-beta-D-ribosyl)imidazole-4-carboxamide + L-glutamine = D-erythro-1-(imidazol-4-yl)glycerol 3-phosphate + 5-amino-1-(5-phospho-beta-D-ribosyl)imidazole-4-carboxamide + L-glutamate + H(+). The protein operates within amino-acid biosynthesis; L-histidine biosynthesis; L-histidine from 5-phospho-alpha-D-ribose 1-diphosphate: step 5/9. Its function is as follows. IGPS catalyzes the conversion of PRFAR and glutamine to IGP, AICAR and glutamate. The HisF subunit catalyzes the cyclization activity that produces IGP and AICAR from PRFAR using the ammonia provided by the HisH subunit. The protein is Imidazole glycerol phosphate synthase subunit HisF of Pseudomonas paraeruginosa (strain DSM 24068 / PA7) (Pseudomonas aeruginosa (strain PA7)).